The primary structure comprises 313 residues: Porphobilinogen deaminase (313 aa).

Cys-242 is modified (S-(dipyrrolylmethanemethyl)cysteine).

Belongs to the HMBS family. Monomer. It depends on dipyrromethane as a cofactor.

The catalysed reaction is 4 porphobilinogen + H2O = hydroxymethylbilane + 4 NH4(+). Its pathway is porphyrin-containing compound metabolism; protoporphyrin-IX biosynthesis; coproporphyrinogen-III from 5-aminolevulinate: step 2/4. Tetrapolymerization of the monopyrrole PBG into the hydroxymethylbilane pre-uroporphyrinogen in several discrete steps. In Proteus mirabilis (strain HI4320), this protein is Porphobilinogen deaminase.